The primary structure comprises 460 residues: MAVSLWQQCIGRLQDELSAQQFSMWIRPLQAEMDGDTLVLYAPNRFVLDWVRDKYINIINQFFTEQMGNDAPKLRFDIGSRPSAKKPEPAPVAAVRVPNPQTKASVGTSFNTTEPVVNANHRSNINPTYQFDNFVEGKSNQLGKAAALQVAENPGGAYNPLFLYGGTGLGKTHLLHAVGNGIIKNNPNAKVVYMHSERFVQDMVKALQNNAIEEFKRYYRSVDALFIDDIQFFANKDRSQEEFFHTFNALLEGNHQIILTSDRYPKEIDGVEDRLKSRFGWGLTVAIEPPELETRVAILMRKAQESGINLPDEVAFFIAKRLRSNVRELEGALNRVIANANFTGRPITIDFVREALRDLLALQEKLVTIDNIQKTVAEYYKIKMADMLSKRRSRSVARPRQVAMALSKELTNQSLPEIGDAFGGRDHTTVLHACRKIAQLREESHDIKEDYANLIRTLSS.

The segment at 1–84 (MAVSLWQQCI…RFDIGSRPSA (84 aa)) is domain I, interacts with DnaA modulators. The segment at 84 to 123 (AKKPEPAPVAAVRVPNPQTKASVGTSFNTTEPVVNANHRS) is domain II. The segment at 124–340 (NINPTYQFDN…GALNRVIANA (217 aa)) is domain III, AAA+ region. ATP is bound by residues Gly-168, Gly-170, Lys-171, and Thr-172. Positions 341–460 (NFTGRPITID…YANLIRTLSS (120 aa)) are domain IV, binds dsDNA.

It belongs to the DnaA family. As to quaternary structure, oligomerizes as a right-handed, spiral filament on DNA at oriC.

The protein resides in the cytoplasm. Functionally, plays an essential role in the initiation and regulation of chromosomal replication. ATP-DnaA binds to the origin of replication (oriC) to initiate formation of the DNA replication initiation complex once per cell cycle. Binds the DnaA box (a 9 base pair repeat at the origin) and separates the double-stranded (ds)DNA. Forms a right-handed helical filament on oriC DNA; dsDNA binds to the exterior of the filament while single-stranded (ss)DNA is stabiized in the filament's interior. The ATP-DnaA-oriC complex binds and stabilizes one strand of the AT-rich DNA unwinding element (DUE), permitting loading of DNA polymerase. After initiation quickly degrades to an ADP-DnaA complex that is not apt for DNA replication. Binds acidic phospholipids. This is Chromosomal replication initiator protein DnaA from Shewanella sp. (strain MR-7).